The primary structure comprises 242 residues: Small ribosomal subunit protein uS2 (242 aa).

Belongs to the universal ribosomal protein uS2 family.

The protein is Small ribosomal subunit protein uS2 of Shewanella baltica (strain OS223).